Reading from the N-terminus, the 21-residue chain is Nitrilase (21 aa).

This sequence belongs to the carbon-nitrogen hydrolase superfamily. Nitrilase family.

It carries out the reaction a nitrile + 2 H2O = a carboxylate + NH4(+). Functionally, acts on many kinds of nitrile compounds such as aliphatic, aromatic, and heterocyclic mononitriles or dinitriles. Prefers S-(-)-2-(4'-isobutylphenyl)-propionitrile to R-(+)-2-(4'-isobutylphenyl)-propionitrile as the substrate. This chain is Nitrilase, found in Acinetobacter sp. (strain AK226).